The primary structure comprises 241 residues: Methylthioribulose-1-phosphate dehydratase (241 aa).

Positions 1-17 (MAKQVENNNNDHLVQST) are enriched in polar residues. A disordered region spans residues 1 to 21 (MAKQVENNNNDHLVQSTDPEH). Substrate is bound at residue cysteine 100. 2 residues coordinate Zn(2+): histidine 117 and histidine 119. Catalysis depends on glutamate 146, which acts as the Proton donor/acceptor. A Zn(2+)-binding site is contributed by histidine 202.

The protein belongs to the aldolase class II family. MtnB subfamily. Zn(2+) is required as a cofactor.

It is found in the cytoplasm. The enzyme catalyses 5-(methylsulfanyl)-D-ribulose 1-phosphate = 5-methylsulfanyl-2,3-dioxopentyl phosphate + H2O. It participates in amino-acid biosynthesis; L-methionine biosynthesis via salvage pathway; L-methionine from S-methyl-5-thio-alpha-D-ribose 1-phosphate: step 2/6. In terms of biological role, catalyzes the dehydration of methylthioribulose-1-phosphate (MTRu-1-P) into 2,3-diketo-5-methylthiopentyl-1-phosphate (DK-MTP-1-P). The polypeptide is Methylthioribulose-1-phosphate dehydratase (Aspergillus flavus (strain ATCC 200026 / FGSC A1120 / IAM 13836 / NRRL 3357 / JCM 12722 / SRRC 167)).